The chain runs to 932 residues: 3-hydroxy-3-methylglutaryl-coenzyme A reductase (932 aa).

6 helical membrane passes run 20–40 (VIVC…FTGL), 59–79 (LSSD…YLYL), 92–112 (ILGI…SAVI), 113–133 (HLFG…LLLI), 162–182 (MAIL…VISI), and 193–213 (VFCC…MTFF). Asparagine 279 carries N-linked (GlcNAc...) asparagine glycosylation. Residues 322–342 (ILTAILATVLASHYIFFSDLA) traverse the membrane as a helical segment. Residues 343-467 (TYPEKRVSIM…APRPMPELLE (125 aa)) are linker. A compositionally biased stretch (basic and acidic residues) spans 357–367 (VVNPGSDHEDA). The interval 357 to 442 (VVNPGSDHED…SGSEDEEEEV (86 aa)) is disordered. Positions 374–403 (GTLSSSPSTSDVRVIESMTSRTQACQTDPV) are enriched in polar residues. The span at 406–421 (SPRNSRSSSPVSSHSV) shows a compositional bias: low complexity. The catalytic stretch occupies residues 468 to 932 (ILNVGKGPNA…APGTCTANAS (465 aa)). Active-site charge relay system residues include glutamate 575, lysine 707, and aspartate 783. The N-linked (GlcNAc...) asparagine glycan is linked to asparagine 850. The active-site Proton donor is histidine 882. Asparagine 886 carries N-linked (GlcNAc...) asparagine glycosylation. Phosphoserine; by AMPK is present on serine 888.

This sequence belongs to the HMG-CoA reductase family.

The protein resides in the endoplasmic reticulum membrane. It carries out the reaction (R)-mevalonate + 2 NADP(+) + CoA = (3S)-3-hydroxy-3-methylglutaryl-CoA + 2 NADPH + 2 H(+). It functions in the pathway metabolic intermediate biosynthesis; (R)-mevalonate biosynthesis; (R)-mevalonate from acetyl-CoA: step 3/3. Its function is as follows. This transmembrane glycoprotein is involved in the control of cholesterol biosynthesis. It is the rate-limiting enzyme of sterol biosynthesis. This Strongylocentrotus purpuratus (Purple sea urchin) protein is 3-hydroxy-3-methylglutaryl-coenzyme A reductase (HMGCR).